The primary structure comprises 250 residues: tRNA (guanine-N(1)-)-methyltransferase (250 aa).

S-adenosyl-L-methionine-binding positions include G116 and 136-141 (IGDYVL).

This sequence belongs to the RNA methyltransferase TrmD family. As to quaternary structure, homodimer.

The protein resides in the cytoplasm. The enzyme catalyses guanosine(37) in tRNA + S-adenosyl-L-methionine = N(1)-methylguanosine(37) in tRNA + S-adenosyl-L-homocysteine + H(+). Its function is as follows. Specifically methylates guanosine-37 in various tRNAs. The sequence is that of tRNA (guanine-N(1)-)-methyltransferase from Pseudomonas fluorescens (strain ATCC BAA-477 / NRRL B-23932 / Pf-5).